We begin with the raw amino-acid sequence, 76 residues long: Contulakin-G (76 aa).

The first 22 residues, 1 to 22 (MQTAYWVMVMMMVWIAAPLSEG), serve as a signal peptide directing secretion. Residues 23 to 50 (GKLNDVIRGLVPDDITPQLILGSLISRR) constitute a propeptide that is removed on maturation. Residue Gln-51 is modified to Pyrrolidone carboxylic acid. The tract at residues 51-76 (QSEEGGSNATKKPYILRASDQVASGP) is disordered. O-linked (GalNAc...) threonine glycosylation occurs at Thr-60. Residues 67–76 (RASDQVASGP) constitute a propeptide that is removed on maturation.

Belongs to the conotoxin C superfamily. Post-translationally, O-glycosylated. The glycosylation seems to enhance the affinity to the neurotensin receptors. In terms of tissue distribution, expressed by the venom duct.

It is found in the secreted. Acts as an agonist of neurotensin receptors. It binds to human neurotensin type 1 receptor (NTSR1), rat neurotensin types 1 and 2 receptors (NTSR1/NTSR2) and mouse neurotensin type 3 receptor (SORT1). This chain is Contulakin-G, found in Conus geographus (Geography cone).